The sequence spans 259 residues: Caffeoyl-CoA O-methyltransferase 1 (259 aa).

The segment covering 1–14 (MATTTTEATKTSST) has biased composition (low complexity). A disordered region spans residues 1–29 (MATTTTEATKTSSTNGEDQKQSQNLRHQE). Residue alanine 2 is modified to N-acetylalanine. Residue lysine 33 coordinates substrate. S-adenosyl-L-methionine contacts are provided by residues threonine 75, glutamate 97, 99-100 (GV), serine 105, aspartate 123, and alanine 152. Aspartate 175 lines the substrate pocket. A divalent metal cation is bound at residue aspartate 175. Aspartate 177 contributes to the S-adenosyl-L-methionine binding site. A divalent metal cation is bound by residues aspartate 201 and asparagine 202. Asparagine 206 is a substrate binding site.

The protein belongs to the class I-like SAM-binding methyltransferase superfamily. Cation-dependent O-methyltransferase family. CCoAMT subfamily. Requires a divalent metal cation as cofactor. Expressed in stems and roots. Detected in leaves, siliques, flower buds, flowers. Expressed in the tapetum, but not in the endothecium. Detected in the vascular system of leaves and all flower organs, including stigma, stamens, petals and sepals.

It catalyses the reaction (E)-caffeoyl-CoA + S-adenosyl-L-methionine = (E)-feruloyl-CoA + S-adenosyl-L-homocysteine + H(+). The protein operates within aromatic compound metabolism; phenylpropanoid biosynthesis. Its function is as follows. Methylates caffeoyl-CoA to feruloyl-CoA. Has a very low activity with caffeic acid and esculetin. Involved in scopoletin biosynthesis in roots. This chain is Caffeoyl-CoA O-methyltransferase 1 (CCOAOMT1), found in Arabidopsis thaliana (Mouse-ear cress).